Consider the following 393-residue polypeptide: Putative bacilysin exporter BacE (393 aa).

Transmembrane regions (helical) follow at residues 11 to 31 (LLFGQALSFMGDYCVLPALLI), 43 to 63 (SGVIAVRSIPMVFQPFLGVLV), 69 to 89 (VKIMLWTDVIRGVIFLGLTFL), 92 to 112 (GEYPLLFLALLFVSYGSGVFF), 133 to 155 (LFAKATTISIIVGAAAGGLFLLG), 160 to 177 (LAVAFNGVTYLVSAFFIS), 215 to 235 (MFTMITMALLWGVVYSYFPIV), 244 to 264 (IGNFLLTFCIGFGGFIGAALV), 287 to 307 (ALFLFTPIFAVSVIAAILFFI), and 353 to 373 (IVDAAVIMAFIVLLVSGLFLH).

This sequence belongs to the major facilitator superfamily.

Its subcellular location is the cell membrane. In terms of biological role, part of the bacilysin biosynthesis operon. May be involved in self-resistance to bacilysin by permitting efflux of this antibiotic. The chain is Putative bacilysin exporter BacE (bacE) from Bacillus amyloliquefaciens (Bacillus velezensis).